Reading from the N-terminus, the 1534-residue chain is Slit homolog 1 protein (1534 aa).

The first 33 residues, 1 to 33, serve as a signal peptide directing secretion; it reads MALTPGWGSSAGPVRPELWLLLWAAAWRLGASA. In terms of domain architecture, LRRNT spans 34–61; sequence CPALCTCTGTTVDCHGTGLQAIPKNIPR. LRR repeat units follow at residues 62–83, 86–107, 110–131, 134–155, 158–179, and 182–203; these read NTERLELNGNNITRIHKNDFAG, QLRVLQLMENQIGAVERGAFDD, ELERLRLNRNQLHMLPELLFQN, ALSRLDLSENAIQAIPRKAFRG, DLKNLQLDKNQISCIEEGAFRA, and GLEVLTLNNNNITTIPVSSFNH. N-linked (GlcNAc...) asparagine glycosylation is present at asparagine 72. N-linked (GlcNAc...) asparagine glycosylation occurs at asparagine 192. Residues 215-265 enclose the LRRCT 1 domain; that stretch reads NHLFCDCHLAWLSQWLRQRPTIGLFTQCSGPASLRGLNVAEVQKSEFSCSG. The 37-residue stretch at 273-309 folds into the LRRNT 2 domain; that stretch reads PTCTLSSGSCPAMCTCSNGIVDCRGKGLTAIPANLPE. Cysteine 286 and cysteine 295 are disulfide-bonded. 5 LRR repeats span residues 310-331, 334-355, 358-379, 382-403, and 406-427; these read TMTEIRLELNGIKSIPPGAFSP, KLRRIDLSNNQIAEIAPDAFQG, SLNSLVLYGNKITDLPRGVFGG, TLQLLLLNANKINCIRPDAFQD, and NLSLLSLYDNKIQSLAKGTFTS. Asparagine 406 carries N-linked (GlcNAc...) asparagine glycosylation. One can recognise an LRRCT 2 domain in the interval 439–489; the sequence is NPFICDCNLKWLADFLRTNPIETSGARCASPRRLANKRIGQIKSKKFRCSA. Cystine bridges form between cysteine 443-cysteine 466, cysteine 445-cysteine 487, cysteine 513-cysteine 519, and cysteine 517-cysteine 526. One can recognise an LRRNT 3 domain in the interval 504 to 540; the sequence is NSECNSDVVCPHKCRCEANVVECSSLKLTKIPERIPQ. 5 LRR repeats span residues 541-562, 566-587, 590-611, 614-635, and 638-659; these read STAELRLNNNEISILEATGMFK, HLKKINLSNNKVSEIEDGAFEG, SVSELHLTANQLESIRSGMFRG, GLRTLMLRNNRISCIHNDSFTG, and NVRLLSLYDNQITTVSPGAFDT. Residue asparagine 571 is glycosylated (N-linked (GlcNAc...) asparagine). N-linked (GlcNAc...) asparagine glycosylation is present at asparagine 630. An LRRCT 3 domain is found at 671 to 721; the sequence is NPFNCNCQLAWLGGWLRKRKIVTGNPRCQNPDFLRQIPLQDVAFPDFRCEE. 2 disulfide bridges follow: cysteine 675–cysteine 698 and cysteine 677–cysteine 719. An LRRNT 4 domain is found at 725–761; sequence EGGCLPRPQCPQECACLDTVVRCSNKHLRALPKGIPK. N-linked (GlcNAc...) asparagine glycosylation is found at asparagine 762, asparagine 801, and asparagine 806. 4 LRR repeats span residues 762–783, 785–806, 809–830, and 833–854; these read NVTELYLDGNQFTLVPGQLSTF, YLQLVDLSNNKISSLSNSSFTN, QLTTLILSYNALQCIPPLAFQG, and SLRLLSLHGNDISTLQEGIFAD. One can recognise an LRRCT 4 domain in the interval 866–916; the sequence is NPLYCDCHLRWLSSWVKTGYKEPGIARCAGPQDMEGKLLLTTPAKKFECQG. EGF-like domains follow at residues 927 to 962, 964 to 1003, 1005 to 1041, 1043 to 1081, 1083 to 1119, and 1127 to 1163; these read DLCLSSPCQNQGTCHNDPLEVYRCACPSGYKGRDCE, SLDSCSSGPCENGGTCHAQEGEDAPFTCSCPTGFEGPTCG, NTDDCVDHACANGGVCVDGVGNYTCQCPLQYEGKACE, LVDLCSPDLNPCQHEAQCVGTPDGPRCECMPGYAGDNCS, NQDDCRDHRCQNGAQCMDEVNSYSCLCAEGYSGQLCE, and PKSPCEGTECQNGANCVDQGNRPVCQCLPGFGGPECE. Cystine bridges form between cysteine 929/cysteine 940, cysteine 934/cysteine 950, cysteine 952/cysteine 961, cysteine 968/cysteine 979, cysteine 973/cysteine 991, cysteine 993/cysteine 1002, cysteine 1009/cysteine 1020, cysteine 1014/cysteine 1029, cysteine 1031/cysteine 1040, cysteine 1047/cysteine 1060, cysteine 1054/cysteine 1069, cysteine 1071/cysteine 1080, cysteine 1087/cysteine 1098, cysteine 1092/cysteine 1107, cysteine 1109/cysteine 1118, cysteine 1131/cysteine 1142, cysteine 1136/cysteine 1151, and cysteine 1153/cysteine 1162. Residue asparagine 1026 is glycosylated (N-linked (GlcNAc...) asparagine). N-linked (GlcNAc...) asparagine glycosylation is present at asparagine 1079. Positions 1166 to 1339 constitute a Laminin G-like domain; that stretch reads LSVNFVDRDT…QMKPGVVPGC (174 aa). N-linked (GlcNAc...) asparagine glycans are attached at residues asparagine 1189, asparagine 1259, and asparagine 1306. Cystine bridges form between cysteine 1313/cysteine 1339, cysteine 1342/cysteine 1352, cysteine 1347/cysteine 1362, cysteine 1364/cysteine 1373, cysteine 1381/cysteine 1391, cysteine 1386/cysteine 1401, cysteine 1403/cysteine 1412, cysteine 1422/cysteine 1432, cysteine 1427/cysteine 1442, cysteine 1444/cysteine 1453, cysteine 1459/cysteine 1498, cysteine 1477/cysteine 1512, cysteine 1488/cysteine 1528, and cysteine 1492/cysteine 1530. EGF-like domains lie at 1340 to 1374, 1377 to 1413, and 1418 to 1454; these read EPCRKLYCLHGICQPNATPGPMCHCEAGWVGLHCD, ADGPCHGHKCVHGQCVPLDALSYSCQCQDGYSGALCN, and LAEPCRGLQCLHGHCQASGTKGAHCVCDPGFSGELCE. Residues 1459-1534 enclose the CTCK domain; that stretch reads CRGDPVRDFH…PTKCGCALCA (76 aa).

Interacts with ROBO1 and GREM1. Predominantly expressed in adult forebrain. Expressed in fetal brain, lung and kidney.

It localises to the secreted. In terms of biological role, thought to act as molecular guidance cue in cellular migration, and function appears to be mediated by interaction with roundabout homolog receptors. During neural development involved in axonal navigation at the ventral midline of the neural tube and projection of axons to different regions. SLIT1 and SLIT2 together seem to be essential for midline guidance in the forebrain by acting as repulsive signal preventing inappropriate midline crossing by axons projecting from the olfactory bulb. The polypeptide is Slit homolog 1 protein (SLIT1) (Homo sapiens (Human)).